The following is a 521-amino-acid chain: Outer membrane protein assembly factor BamB (521 aa).

The N-terminal stretch at 1-19 (MKKLFLVIVPLLLSLLATS) is a signal peptide. The N-palmitoyl cysteine moiety is linked to residue C20. The S-diacylglycerol cysteine moiety is linked to residue C20. A disordered region spans residues 418 to 521 (KSGSIESSPK…IGDFSKGDSD (104 aa)). Basic and acidic residues predominate over residues 429–444 (LPDKKVDSNKTSKNDT). The segment covering 445–477 (DSNPATTATSTKDIQNPANQEMINSTPVSNTST) has biased composition (polar residues).

This sequence belongs to the BamB family. In terms of assembly, part of the Bam complex.

It is found in the cell outer membrane. Its function is as follows. Part of the outer membrane protein assembly complex, which is involved in assembly and insertion of beta-barrel proteins into the outer membrane. The sequence is that of Outer membrane protein assembly factor BamB from Francisella salina.